The primary structure comprises 226 residues: MKPEPQSEAELMERAHDIAGLSFAELADEAGMTVPENLKRDKGWVGQLLEWHLGAPAGSKPQQDFSKLGIELKSIPIGYNGRPLETTFVCVAPLTGVQGLTWETSHVRNKLSRVLWVPVEGEREIPLAERRVGTPLIWSPDKEEEQILRNDWEELMEMIVFGKFDQISARHGEALHLRPKAANAKALTEAYSSNGKPMKTLPRGFYLRTQFTEQILLKHYINVQSE.

The protein belongs to the MutH family.

It is found in the cytoplasm. Functionally, sequence-specific endonuclease that cleaves unmethylated GATC sequences. It is involved in DNA mismatch repair. In Vibrio parahaemolyticus serotype O3:K6 (strain RIMD 2210633), this protein is DNA mismatch repair protein MutH.